The chain runs to 144 residues: Large ribosomal subunit protein uL15 (144 aa).

Residues 1-57 are disordered; that stretch reads MLLNTLSPAAGSKHAPKRLGRGVGSGLGKTGGRGHKGQKSRSGGKVRPGFEGGQMPL. Positions 21–31 are enriched in gly residues; the sequence is RGVGSGLGKTG. A compositionally biased stretch (basic residues) spans 32-44; it reads GRGHKGQKSRSGG.

It belongs to the universal ribosomal protein uL15 family. In terms of assembly, part of the 50S ribosomal subunit.

Its function is as follows. Binds to the 23S rRNA. The protein is Large ribosomal subunit protein uL15 of Vibrio cholerae serotype O1 (strain ATCC 39315 / El Tor Inaba N16961).